Reading from the N-terminus, the 441-residue chain is Damage-control phosphatase ARMT1 (441 aa).

Ala2 is subject to N-acetylalanine. At Lys40 the chain carries N6-acetyllysine. The residue at position 102 (Ser102) is a Phosphoserine. Asp253 and Asn254 together coordinate Mn(2+). 253–254 is a binding site for substrate; it reads DN. S-adenosyl-L-methionine contacts are provided by Glu258 and Asp291. Asp291 serves as a coordination point for Mn(2+). Substrate contacts are provided by residues 367–371 and Lys404; that span reads DLNYR. A Subfamily III RTxK motif motif is present at residues 401–404; it reads RTLK.

The protein belongs to the damage-control phosphatase family. Sugar phosphate phosphatase III subfamily. The cofactor is Mn(2+). Ni(2+) serves as cofactor. Post-translationally, automethylated.

It carries out the reaction beta-D-fructose 1-phosphate + H2O = D-fructose + phosphate. It catalyses the reaction beta-D-fructose 6-phosphate = dihydroxyacetone + D-glyceraldehyde 3-phosphate. The enzyme catalyses L-glutamyl-[protein] + S-adenosyl-L-methionine = [protein]-L-glutamate 5-O-methyl ester + S-adenosyl-L-homocysteine. In terms of biological role, metal-dependent phosphatase that shows phosphatase activity against several substrates, including fructose-1-phosphate and fructose-6-phosphate. Its preference for fructose-1-phosphate, a strong glycating agent that causes DNA damage rather than a canonical yeast metabolite, suggests a damage-control function in hexose phosphate metabolism. Has also been shown to have O-methyltransferase activity that methylates glutamate residues of target proteins to form gamma-glutamyl methyl ester residues. Possibly methylates PCNA, suggesting it is involved in the DNA damage response. The sequence is that of Damage-control phosphatase ARMT1 from Macaca fascicularis (Crab-eating macaque).